We begin with the raw amino-acid sequence, 236 residues long: Adenosine 5'-phosphosulfate reductase (236 aa).

[4Fe-4S] cluster is bound by residues Cys-122, Cys-123, Cys-205, and Cys-208. Cys-231 (nucleophile; cysteine thiosulfonate intermediate) is an active-site residue.

The protein belongs to the PAPS reductase family. CysH subfamily. It depends on [4Fe-4S] cluster as a cofactor.

Its subcellular location is the cytoplasm. It carries out the reaction [thioredoxin]-disulfide + sulfite + AMP + 2 H(+) = adenosine 5'-phosphosulfate + [thioredoxin]-dithiol. It participates in sulfur metabolism; hydrogen sulfide biosynthesis; sulfite from sulfate. Catalyzes the formation of sulfite from adenosine 5'-phosphosulfate (APS) using thioredoxin as an electron donor. This is Adenosine 5'-phosphosulfate reductase from Mycolicibacterium smegmatis (strain ATCC 700084 / mc(2)155) (Mycobacterium smegmatis).